A 174-amino-acid polypeptide reads, in one-letter code: Ribosome maturation factor RimM (174 aa).

The region spanning 97–169 (GNKFYFHEVI…KVVMDLPEGL (73 aa)) is the PRC barrel domain.

Belongs to the RimM family. In terms of assembly, binds ribosomal protein uS19.

Its subcellular location is the cytoplasm. In terms of biological role, an accessory protein needed during the final step in the assembly of 30S ribosomal subunit, possibly for assembly of the head region. Essential for efficient processing of 16S rRNA. May be needed both before and after RbfA during the maturation of 16S rRNA. It has affinity for free ribosomal 30S subunits but not for 70S ribosomes. The protein is Ribosome maturation factor RimM of Flavobacterium psychrophilum (strain ATCC 49511 / DSM 21280 / CIP 103535 / JIP02/86).